We begin with the raw amino-acid sequence, 501 residues long: Endosomal/lysosomal proton channel TMEM175 (501 aa).

The disordered stretch occupies residues 1–20 (MAAPRAATPGPGGGARKPEL). Topologically, residues 1–31 (MAAPRAATPGPGGGARKPELDLELGSSTQTS) are cytoplasmic. Residues 32–54 (HRLLAYSDALLSIIATVMILPVA) form a helical membrane-spanning segment. A RxxxFSD motif 1 motif is present at residues 33 to 39 (RLLAYSD). Residues 55–75 (HTKIHPDQKLGESVQQLLLTK) are Lumenal-facing. A short helix H1-1 region spans residues 56 to 61 (TKIHPD). The tract at residues 63–69 (KLGESVQ) is short helix H2-1. The chain crosses the membrane as a helical span at residues 76 to 98 (IAVYLMTFLIVTVAWAAHVRLFQ). Over 99-104 (VIELID) the chain is Cytoplasmic. The helical transmembrane segment at 105-126 (DVLALLNLACMMIITFLPYTFS) threads the bilayer. Over 127–136 (LMASFPGVPF) the chain is Lumenal. The helical transmembrane segment at 137 to 158 (GIFLFSVCAVVIGLIQAVIVVY) threads the bilayer. The Cytoplasmic segment spans residues 159 to 182 (GFYHPHLLNQQIQVSENQNFYKRH). A helical transmembrane segment spans residues 183–203 (ILKIILRGPALCFLAAIFSFF). Topologically, residues 204-208 (FIPLS) are lumenal. Residues 209–228 (YLLLGLVIVFPHLSRFITWC) traverse the membrane as a helical segment. At 229–257 (KTKIVGHRDEEEASYSLETFSFYLSEPLS) the chain is on the cytoplasmic side. Residues 258-282 (KERVEAFSDGVYAIVATLLILDICE) traverse the membrane as a helical segment. The RxxxFSD motif 2 signature appears at 260 to 266 (RVEAFSD). The Lumenal portion of the chain corresponds to 283–309 (DNVPDPREVGEKFHGSLLEALSEYGPN). The short helix H1-2 stretch occupies residues 288–296 (PREVGEKFH). Positions 298 to 304 (SLLEALS) are short helix H2-2. A helical transmembrane segment spans residues 310-332 (YLAYFGSFVTIGLLWFVHHSLFL). Residues 333-338 (YVTKAT) lie on the Cytoplasmic side of the membrane. Residues 339–360 (RLMGLLNILSLAFIGGLPLAYQ) traverse the membrane as a helical segment. Topologically, residues 361–375 (LTSEFAEKSHNEIEA) are lumenal. Residues 376-396 (IQVSCVITFFASIFQFAIWTT) traverse the membrane as a helical segment. The Cytoplasmic portion of the chain corresponds to 397–416 (ALLHERETLHPFARYGGKEH). A helical transmembrane segment spans residues 417 to 440 (AFMFAKLALYPCVSLGAFFLTCLL). The Lumenal portion of the chain corresponds to 441–442 (SE). Residues 443-469 (FSTEIFHLMQIVIPFAFLALRIFVRIS) traverse the membrane as a helical segment. Residues 470–501 (LTVIKSVMSLSRRKVVLLEEEEACLSPTETHS) are Cytoplasmic-facing.

This sequence belongs to the TMEM175 family. As to quaternary structure, homodimer.

It localises to the endosome membrane. Its subcellular location is the lysosome membrane. It catalyses the reaction H(+)(in) = H(+)(out). The catalysed reaction is K(+)(in) = K(+)(out). Active at low pH (under pH 4.6): proton channel activity is activated by luminal side protons. Polyunsaturated fatty acids, such as arachidonic acid, also activate the channel activity. In terms of biological role, proton-activated proton channel that catalyzes proton efflux from endosomes and lysosomes to maintain a steady-state pH. Activated at low pH (under pH 4.6) by luminal side protons: selectively mediates lysosomal proton release from lysosomes, eliciting a proton leak that balances V-ATPase activity to maintain pH homeostasis. Regulation of lumenal pH stability is required for autophagosome-lysosome fusion. Also acts as a potassium channel at higher pH, regulating potassium conductance in endosomes and lysosomes. This Gallus gallus (Chicken) protein is Endosomal/lysosomal proton channel TMEM175.